A 562-amino-acid polypeptide reads, in one-letter code: Glutamine--tRNA ligase (562 aa).

The 'HIGH' region signature appears at 35–45 (PEPNGYLHIGH). ATP-binding positions include 36–38 (EPN) and 42–48 (HIGHAKS). 2 residues coordinate L-glutamine: Asp68 and Tyr213. Residues Thr232, 262-263 (RL), and 270-272 (LSK) contribute to the ATP site. The 'KMSKS' region signature appears at 269–273 (ILSKR).

Belongs to the class-I aminoacyl-tRNA synthetase family. As to quaternary structure, monomer.

The protein localises to the cytoplasm. The catalysed reaction is tRNA(Gln) + L-glutamine + ATP = L-glutaminyl-tRNA(Gln) + AMP + diphosphate. This is Glutamine--tRNA ligase from Buchnera aphidicola subsp. Schizaphis graminum (strain Sg).